Here is a 159-residue protein sequence, read N- to C-terminus: Protein C2 (159 aa).

The Nuclear localization signal signature appears at 43–60; sequence KKRPPKLTWAPKKKRRKA. Residues 65–81 fold into a zinc finger; sequence CGCSYYGGIDCEDGFTH. The segment at 102-139 is disordered; it reads PNLLPPPEHNNNGDGEQNNNITNQSQPQPAESVGSPDL. Residues 110–124 show a composition bias toward low complexity; the sequence is HNNNGDGEQNNNITN.

The protein belongs to the geminiviridae transcriptional activator protein family. As to quaternary structure, monomer. Suppress local silencing by interacting with and inactivating host adenosine kinase 2 (ADK2) in the cytoplasm. Interacts with and inhibits host SNF1 kinase.

Its subcellular location is the host cytoplasm. In terms of biological role, acts as a suppressor of RNA-mediated gene silencing, also known as post-transcriptional gene silencing (PTGS), a mechanism of plant viral defense that limits the accumulation of viral RNAs. Suppresses the host RNA silencing by inhibiting adenosine kinase 2 (ADK2), a kinase involved in a general methylation pathway. Also suppresses the host basal defense by interacting with and inhibiting SNF1 kinase, a key regulator of cell metabolism implicated in innate antiviral defense. Determines pathogenicity. The polypeptide is Protein C2 (Tomato pseudo-curly top virus (TPCTV)).